The chain runs to 59 residues: QAVRYADGYTYDIETGQVSSPYTGRVYETKGKAPFYGFGFEHPYHYYPGYYHGYPHAFY.

A Pyrrolidone carboxylic acid modification is found at glutamine 1.

The protein is Cuticle protein 7 isoform c of Limulus polyphemus (Atlantic horseshoe crab).